A 103-amino-acid polypeptide reads, in one-letter code: Histone H4 (103 aa).

Over residues 1–14 (MSGRGKGGKGLGKG) the composition is skewed to gly residues. The tract at residues 1–20 (MSGRGKGGKGLGKGGAKRHR) is disordered. At Ser2 the chain carries N-acetylserine. Lys17 is subject to N6-acetyllysine. The DNA-binding element occupies 17-21 (KRHRK). Lys21 is modified (N6-methyllysine).

Belongs to the histone H4 family. As to quaternary structure, the nucleosome is a histone octamer containing two molecules each of H2A, H2B, H3 and H4 assembled in one H3-H4 heterotetramer and two H2A-H2B heterodimers. The octamer wraps approximately 147 bp of DNA.

Its subcellular location is the nucleus. It localises to the chromosome. In terms of biological role, core component of nucleosome. Nucleosomes wrap and compact DNA into chromatin, limiting DNA accessibility to the cellular machineries which require DNA as a template. Histones thereby play a central role in transcription regulation, DNA repair, DNA replication and chromosomal stability. DNA accessibility is regulated via a complex set of post-translational modifications of histones, also called histone code, and nucleosome remodeling. The protein is Histone H4 of Eucalyptus globulus (Tasmanian blue gum).